Reading from the N-terminus, the 412-residue chain is Branched-chain alpha-ketoacid dehydrogenase kinase (412 aa).

The transit peptide at 1–30 directs the protein to the mitochondrion; it reads MILASVLGSGPRGGPPLRPLLGPALSLRAR. Serine 31 is modified (phosphoserine). Position 52 is a phosphoserine; by autocatalysis (serine 52). The Histidine kinase domain maps to 159 to 404; the sequence is LDDHKDVVTL…DVYLRLRHID (246 aa). N6-acetyllysine occurs at positions 192 and 233. ATP contacts are provided by asparagine 279 and aspartate 315. Asparagine 279 is a binding site for Mg(2+). K(+)-binding residues include valine 328, aspartate 330, and phenylalanine 333. The ATP site is built by threonine 334 and threonine 335. A phosphoserine mark is found at serine 356 and serine 360. ATP contacts are provided by histidine 364, glycine 367, and leucine 370. Glycine 367 provides a ligand contact to K(+).

This sequence belongs to the PDK/BCKDK protein kinase family. In terms of assembly, homodimer. Homotetramer. Dimerizes through interaction of two opposing nucleotide-binding domains. Interacts with E2 component of the branched-chain alpha-ketoacid dehydrogenase (BCKDH) complex. Competes with BCKDK for binding to the E2 component; this interaction is modulated by branched-chain alpha-keto acids. At steady state, BCKDH holoenzyme contains BCKDK and BCKDHA is phosphorylated. In response to high levels of branched-chain alpha-keto acids, the inhibitory BCKDK is replaced by activating PPM1K leading to BCKDHA dephosphorylation and BCAA degradation. Autophosphorylated.

It is found in the mitochondrion matrix. The protein resides in the mitochondrion. The enzyme catalyses L-seryl-[3-methyl-2-oxobutanoate dehydrogenase] + ATP = O-phospho-L-seryl-[3-methyl-2-oxobutanoate dehydrogenase] + ADP + H(+). It carries out the reaction L-seryl-[protein] + ATP = O-phospho-L-seryl-[protein] + ADP + H(+). In terms of biological role, serine/threonine-protein kinase component of macronutrients metabolism. Forms a functional kinase and phosphatase pair with PPM1K, serving as a metabolic regulatory node that coordinates branched-chain amino acids (BCAAs) with glucose and lipid metabolism via two distinct phosphoprotein targets: mitochondrial BCKDHA subunit of the branched-chain alpha-ketoacid dehydrogenase (BCKDH) complex and cytosolic ACLY, a lipogenic enzyme of Krebs cycle. Phosphorylates and inactivates mitochondrial BCKDH complex a multisubunit complex consisting of three multimeric components each involved in different steps of BCAA catabolism: E1 composed of BCKDHA and BCKDHB, E2 core composed of DBT monomers, and E3 composed of DLD monomers. Associates with the E2 component of BCKDH complex and phosphorylates BCKDHA on Ser-347, leading to conformational changes that interrupt substrate channeling between E1 and E2 and inactivates the BCKDH complex. Phosphorylates ACLY on Ser-455 in response to changes in cellular carbohydrate abundance such as occurs during fasting to feeding metabolic transition. Refeeding stimulates MLXIPL/ChREBP transcription factor, leading to increased BCKDK to PPM1K expression ratio, phosphorylation and activation of ACLY that ultimately results in the generation of malonyl-CoA and oxaloacetate immediate substrates of de novo lipogenesis and glucogenesis, respectively. Recognizes phosphosites having SxxE/D canonical motif. This is Branched-chain alpha-ketoacid dehydrogenase kinase (BCKDK) from Bos taurus (Bovine).